The following is a 248-amino-acid chain: Trypsin I-P1 (248 aa).

A signal peptide spans 1–15 (MKFLVLVAFVGVTVA). The propeptide at 16-25 (FPISDEDDDK) is activation peptide. The 221-residue stretch at 26–246 (IVGGYSCARS…YVSWIKTTMS (221 aa)) folds into the Peptidase S1 domain. Disulfide bonds link Cys32–Cys162, Cys50–Cys66, Cys134–Cys235, Cys141–Cys208, Cys173–Cys187, and Cys198–Cys222. Residue His65 is the Charge relay system of the active site. Residues Glu77, Asn79, and Glu87 each coordinate Ca(2+). The Charge relay system role is filled by Asp109. The active-site Charge relay system is Ser202.

It belongs to the peptidase S1 family. The cofactor is Ca(2+). As to expression, high levels are seen in the pancreas while lower levels are found in the liver, spleen and thymus.

Its subcellular location is the secreted. The protein localises to the extracellular space. The catalysed reaction is Preferential cleavage: Arg-|-Xaa, Lys-|-Xaa.. The sequence is that of Trypsin I-P1 from Gallus gallus (Chicken).